We begin with the raw amino-acid sequence, 350 residues long: Ion-translocating oxidoreductase complex subunit D (350 aa).

A run of 5 helical transmembrane segments spans residues V20–G40, L44–I64, P68–S88, I89–V109, and M125–V145. At T187 the chain carries FMN phosphoryl threonine. A run of 5 helical transmembrane segments spans residues S215–F235, W241–Y261, A267–S287, I300–P320, and A322–Q342.

Belongs to the NqrB/RnfD family. The complex is composed of six subunits: RnfA, RnfB, RnfC, RnfD, RnfE and RnfG. FMN is required as a cofactor.

Its subcellular location is the cell inner membrane. Functionally, part of a membrane-bound complex that couples electron transfer with translocation of ions across the membrane. The protein is Ion-translocating oxidoreductase complex subunit D of Psychromonas ingrahamii (strain DSM 17664 / CCUG 51855 / 37).